The sequence spans 690 residues: Beta-galactosidase (690 aa).

N173 serves as a coordination point for substrate. The active-site Proton donor is the E174. W345 serves as a coordination point for substrate.

The protein belongs to the glycosyl hydrolase 42 family.

It carries out the reaction Hydrolysis of terminal non-reducing beta-D-galactose residues in beta-D-galactosides.. Activity stimulated by beta-mercaptoethanol. In terms of biological role, highly specific towards beta-D-galactoside substrates. Hydrolyzes 5-bromo-4-chloro-3-indolyl-beta-D-galactopyranoside (X-Gal) and o-nitrophenyl-beta-D-galactopyranoside (ONPG). Has activity against p-nitrophenyl(pNP)-beta-D-galactoside, but not significantly at all towards pNP-alpha-D-galactoside, pNP-beta-D-glucoside, pNP-beta-D-mannoside, pNP-beta-L-fucoside, pNP-beta-D-xyloside, pNP-beta-L-arabinoside, pNP-beta-D-galuronide, pNP-beta-D-glucuronide, pNP-beta-D-lactoside or pNP-beta-D-cellobioside. In Arthrobacter sp, this protein is Beta-galactosidase.